Consider the following 335-residue polypeptide: Succinylglutamate desuccinylase (335 aa).

The Zn(2+) site is built by histidine 59, glutamate 62, and histidine 151. Residue glutamate 215 is part of the active site.

Belongs to the AspA/AstE family. Succinylglutamate desuccinylase subfamily. Requires Zn(2+) as cofactor.

It carries out the reaction N-succinyl-L-glutamate + H2O = L-glutamate + succinate. It functions in the pathway amino-acid degradation; L-arginine degradation via AST pathway; L-glutamate and succinate from L-arginine: step 5/5. In terms of biological role, transforms N(2)-succinylglutamate into succinate and glutamate. This chain is Succinylglutamate desuccinylase, found in Pseudomonas syringae pv. tomato (strain ATCC BAA-871 / DC3000).